Consider the following 355-residue polypeptide: Protein RecA (355 aa).

Residue 67-74 (GPESSGKT) participates in ATP binding.

This sequence belongs to the RecA family.

The protein localises to the cytoplasm. Functionally, can catalyze the hydrolysis of ATP in the presence of single-stranded DNA, the ATP-dependent uptake of single-stranded DNA by duplex DNA, and the ATP-dependent hybridization of homologous single-stranded DNAs. It interacts with LexA causing its activation and leading to its autocatalytic cleavage. This Histophilus somni (strain 129Pt) (Haemophilus somnus) protein is Protein RecA.